Here is a 350-residue protein sequence, read N- to C-terminus: Enoyl-[acyl-carrier-protein] reductase, mitochondrial (350 aa).

The N-terminal 12 residues, 1 to 12 (MWLGLRLFHRPF), are a transit peptide targeting the mitochondrion. The active-site Proton donor is tyrosine 68. Residues asparagine 141, 167-170 (NSGV), 190-192 (RDR), 259-262 (YGGM), 284-286 (FWV), and lysine 345 contribute to the NADP(+) site.

Belongs to the zinc-containing alcohol dehydrogenase family. Quinone oxidoreductase subfamily. As to quaternary structure, homodimer. In terms of tissue distribution, expressed in the developing pronephros.

It localises to the mitochondrion. It catalyses the reaction a 2,3-saturated acyl-[ACP] + NADP(+) = a (2E)-enoyl-[ACP] + NADPH + H(+). In terms of biological role, catalyzes the NADPH-dependent reduction of trans-2-enoyl thioesters in mitochondrial fatty acid synthesis (fatty acid synthesis type II). Fatty acid chain elongation in mitochondria uses acyl carrier protein (ACP) as an acyl group carrier, but the enzyme accepts both ACP and CoA thioesters as substrates in vitro. May provide the octanoyl chain used for lipoic acid biosynthesis, regulating protein lipoylation and mitochondrial respiratory activity. Involved in iron homeostasis; affecting Fe-S cluster assembly and ceramide metabolism. Required for proper morphology and bioenergetic functions of mitochondria. Required for maintenance of neurons. Functions in pronephros development, regulating late differentiation of all pronephric tubule segments. The polypeptide is Enoyl-[acyl-carrier-protein] reductase, mitochondrial (mecr) (Xenopus tropicalis (Western clawed frog)).